The sequence spans 252 residues: Floral homeotic protein AGAMOUS (252 aa).

The segment at 1 to 20 is disordered; it reads MAYQSELGGDSSPLRKSGRG. In terms of domain architecture, MADS-box spans 19-73; the sequence is RGKIEIKRIENTTNRQVTFCKRRNGLLKKAYELSVLCDAEVALIVFSSRGRLYEY. Residues 99-166 adopt a coiled-coil conformation; sequence AEINAQYYQQ…KKNELLFSEI (68 aa). Residues 103–193 form the K-box domain; the sequence is AQYYQQESAK…RAKIAENERN (91 aa).

In terms of assembly, homodimer, capable of binding to CArG-box sequences. Forms a heterodimer via the K-box domain with either SEPALATTA1/AGL2, SEPALATTA2/AGL4, SEPALLATA3/AGL9 or AGL6. Heterodimerization also seen with some other Agamous-like MADS-box proteins. Interacts with AGL15 and AGL16. Component of a complex made of FLOR1, VSP1 and AGAMOUS (AG). Binds directly with FLR1. Detected early in the floral meristem but mostly expressed in stamen and carpel primordia.

The protein localises to the nucleus. Probable transcription factor involved in the control of organ identity during the early development of flowers. Is required for normal development of stamens and carpels in the wild-type flower. Plays a role in maintaining the determinacy of the floral meristem. Acts as C class cadastral protein by repressing the A class floral homeotic genes like APETALA1. Forms a heterodimer via the K-box domain with either SEPALATTA1/AGL2, SEPALATTA2/AGL4, SEPALLATA3/AGL9 or AGL6 that could be involved in genes regulation during floral meristem development. Controls AHL21/GIK, a multifunctional chromatin modifier in reproductive organ patterning and differentiation. Induces microsporogenesis through the activation of SPL/NZZ. The sequence is that of Floral homeotic protein AGAMOUS (AG) from Arabidopsis thaliana (Mouse-ear cress).